The following is an 86-amino-acid chain: uncharacterized protein (86 aa).

This is an uncharacterized protein from Haemophilus phage HP1 (strain HP1c1) (Bacteriophage HP1).